Reading from the N-terminus, the 283-residue chain is Pantothenate synthetase (283 aa).

26-33 (MGNLHEGH) serves as a coordination point for ATP. His-33 acts as the Proton donor in catalysis. Gln-57 serves as a coordination point for (R)-pantoate. A beta-alanine-binding site is contributed by Gln-57. 144–147 (GKKD) contributes to the ATP binding site. Residue Gln-150 coordinates (R)-pantoate. Residues Val-173 and 181 to 184 (LSSR) each bind ATP.

It belongs to the pantothenate synthetase family. In terms of assembly, homodimer.

The protein resides in the cytoplasm. The catalysed reaction is (R)-pantoate + beta-alanine + ATP = (R)-pantothenate + AMP + diphosphate + H(+). The protein operates within cofactor biosynthesis; (R)-pantothenate biosynthesis; (R)-pantothenate from (R)-pantoate and beta-alanine: step 1/1. Its function is as follows. Catalyzes the condensation of pantoate with beta-alanine in an ATP-dependent reaction via a pantoyl-adenylate intermediate. In Ralstonia nicotianae (strain ATCC BAA-1114 / GMI1000) (Ralstonia solanacearum), this protein is Pantothenate synthetase.